The chain runs to 218 residues: Monomethylamine corrinoid protein 1 (218 aa).

The B12-binding N-terminal domain occupies 1–91; that stretch reads MANQEIFDKL…ELEKTKVEGE (91 aa). A B12-binding domain is found at 94 to 218; that stretch reads TGLAITFVAE…AAKVALNIMK (125 aa). Residue histidine 107 coordinates methylcob(III)alamin.

This sequence belongs to the methylamine corrinoid protein family. In terms of assembly, can form a complex with MtmB.

Its pathway is one-carbon metabolism; methanogenesis from methylamine. Acts as a methyl group carrier between MtmB and MtbA. The protein is Monomethylamine corrinoid protein 1 (mtmC1) of Methanosarcina mazei (strain ATCC BAA-159 / DSM 3647 / Goe1 / Go1 / JCM 11833 / OCM 88) (Methanosarcina frisia).